The sequence spans 151 residues: Transcriptional regulator MraZ (151 aa).

2 consecutive SpoVT-AbrB domains span residues 5–52 (ANAI…PLSE) and 81–124 (AVDL…DEDA).

This sequence belongs to the MraZ family. In terms of assembly, forms oligomers.

The protein localises to the cytoplasm. Its subcellular location is the nucleoid. The protein is Transcriptional regulator MraZ of Pseudomonas syringae pv. syringae (strain B728a).